Reading from the N-terminus, the 183-residue chain is Nucleoside triphosphate pyrophosphatase (183 aa).

The active-site Proton acceptor is D71.

This sequence belongs to the Maf family. A divalent metal cation is required as a cofactor.

Its subcellular location is the cytoplasm. It carries out the reaction a ribonucleoside 5'-triphosphate + H2O = a ribonucleoside 5'-phosphate + diphosphate + H(+). It catalyses the reaction a 2'-deoxyribonucleoside 5'-triphosphate + H2O = a 2'-deoxyribonucleoside 5'-phosphate + diphosphate + H(+). Nucleoside triphosphate pyrophosphatase. May have a dual role in cell division arrest and in preventing the incorporation of modified nucleotides into cellular nucleic acids. In Campylobacter jejuni subsp. jejuni serotype O:6 (strain 81116 / NCTC 11828), this protein is Nucleoside triphosphate pyrophosphatase.